We begin with the raw amino-acid sequence, 623 residues long: uncharacterized protein (623 aa).

The next 5 membrane-spanning stretches (helical) occupy residues 242–262, 288–308, 318–338, 361–381, and 387–407; these read IVLA…ITWL, IVSP…LDIF, VSMW…IALF, VINL…LLGV, and FNVS…ALAV.

It belongs to the MscS (TC 1.A.23) family.

It localises to the cell membrane. This is an uncharacterized protein from Helicobacter pylori (strain ATCC 700392 / 26695) (Campylobacter pylori).